A 604-amino-acid polypeptide reads, in one-letter code: Elongation factor 4 (604 aa).

A tr-type G domain is found at 8–190; sequence DKIRNFSIIA…AIVNRLPPPR (183 aa). Residues 20 to 25 and 137 to 140 contribute to the GTP site; these read DHGKST and NKID.

The protein belongs to the TRAFAC class translation factor GTPase superfamily. Classic translation factor GTPase family. LepA subfamily.

It localises to the cell inner membrane. The catalysed reaction is GTP + H2O = GDP + phosphate + H(+). Required for accurate and efficient protein synthesis under certain stress conditions. May act as a fidelity factor of the translation reaction, by catalyzing a one-codon backward translocation of tRNAs on improperly translocated ribosomes. Back-translocation proceeds from a post-translocation (POST) complex to a pre-translocation (PRE) complex, thus giving elongation factor G a second chance to translocate the tRNAs correctly. Binds to ribosomes in a GTP-dependent manner. The polypeptide is Elongation factor 4 (Hyphomonas neptunium (strain ATCC 15444)).